The sequence spans 221 residues: uncharacterized protein (221 aa).

In terms of domain architecture, CUE spans Asp20–Thr63. The interval Glu131–Lys194 is disordered. Over residues Lys156–Asn166 the composition is skewed to low complexity. The span at Lys169–Pro183 shows a compositional bias: basic and acidic residues.

This is an uncharacterized protein from Caenorhabditis elegans.